We begin with the raw amino-acid sequence, 316 residues long: GTP cyclohydrolase FolE2 1 (316 aa).

It belongs to the GTP cyclohydrolase IV family.

It carries out the reaction GTP + H2O = 7,8-dihydroneopterin 3'-triphosphate + formate + H(+). The protein operates within cofactor biosynthesis; 7,8-dihydroneopterin triphosphate biosynthesis; 7,8-dihydroneopterin triphosphate from GTP: step 1/1. In terms of biological role, converts GTP to 7,8-dihydroneopterin triphosphate. The protein is GTP cyclohydrolase FolE2 1 of Burkholderia orbicola (strain AU 1054).